The sequence spans 459 residues: Exodeoxyribonuclease 7 large subunit (459 aa).

The protein belongs to the XseA family. Heterooligomer composed of large and small subunits.

Its subcellular location is the cytoplasm. It catalyses the reaction Exonucleolytic cleavage in either 5'- to 3'- or 3'- to 5'-direction to yield nucleoside 5'-phosphates.. Functionally, bidirectionally degrades single-stranded DNA into large acid-insoluble oligonucleotides, which are then degraded further into small acid-soluble oligonucleotides. This Pseudomonas aeruginosa (strain UCBPP-PA14) protein is Exodeoxyribonuclease 7 large subunit.